Here is a 298-residue protein sequence, read N- to C-terminus: HTH-type transcriptional regulator ArgP (298 aa).

Residues 4–60 enclose the HTH lysR-type domain; that stretch reads LDYRWIEALDSVVSKGSFERAAEQLFISQSAVSQRIKQLEKYLAQPVLIREQPPRPT. The H-T-H motif DNA-binding region spans 21–40; sequence FERAAEQLFISQSAVSQRIK.

It belongs to the LysR transcriptional regulatory family. Homodimer.

Its function is as follows. Controls the transcription of genes involved in arginine and lysine metabolism. The chain is HTH-type transcriptional regulator ArgP from Vibrio cholerae serotype O1 (strain ATCC 39315 / El Tor Inaba N16961).